Consider the following 304-residue polypeptide: Aspartate carbamoyltransferase catalytic subunit (304 aa).

Residues arginine 57 and threonine 58 each coordinate carbamoyl phosphate. Lysine 86 contributes to the L-aspartate binding site. Carbamoyl phosphate-binding residues include arginine 107, histidine 135, and glutamine 138. L-aspartate contacts are provided by arginine 168 and arginine 229. Carbamoyl phosphate contacts are provided by leucine 266 and proline 267.

Belongs to the aspartate/ornithine carbamoyltransferase superfamily. ATCase family. As to quaternary structure, heterooligomer of catalytic and regulatory chains.

It carries out the reaction carbamoyl phosphate + L-aspartate = N-carbamoyl-L-aspartate + phosphate + H(+). It participates in pyrimidine metabolism; UMP biosynthesis via de novo pathway; (S)-dihydroorotate from bicarbonate: step 2/3. Its function is as follows. Catalyzes the condensation of carbamoyl phosphate and aspartate to form carbamoyl aspartate and inorganic phosphate, the committed step in the de novo pyrimidine nucleotide biosynthesis pathway. The polypeptide is Aspartate carbamoyltransferase catalytic subunit (Methanosphaera stadtmanae (strain ATCC 43021 / DSM 3091 / JCM 11832 / MCB-3)).